Here is a 432-residue protein sequence, read N- to C-terminus: Enolase (432 aa).

Residue Gln-166 coordinates (2R)-2-phosphoglycerate. Glu-208 functions as the Proton donor in the catalytic mechanism. Positions 245, 291, and 318 each coordinate Mg(2+). (2R)-2-phosphoglycerate contacts are provided by Lys-343, Arg-372, Ser-373, and Lys-394. Lys-343 (proton acceptor) is an active-site residue.

It belongs to the enolase family. Mg(2+) is required as a cofactor.

It is found in the cytoplasm. It localises to the secreted. The protein resides in the cell surface. It catalyses the reaction (2R)-2-phosphoglycerate = phosphoenolpyruvate + H2O. The protein operates within carbohydrate degradation; glycolysis; pyruvate from D-glyceraldehyde 3-phosphate: step 4/5. Functionally, catalyzes the reversible conversion of 2-phosphoglycerate (2-PG) into phosphoenolpyruvate (PEP). It is essential for the degradation of carbohydrates via glycolysis. The polypeptide is Enolase (Leptospira interrogans serogroup Icterohaemorrhagiae serovar copenhageni (strain Fiocruz L1-130)).